A 284-amino-acid chain; its full sequence is MKLDGYTRLAAVVANPIKHSISPFIHNRAFEATATNGAYVAWEIEASDLAETVANIRRYQMFGINLSMPYKEQVIPYLDELSDEARLIGAVNTVVNENGNLIGYNTDGKGFFKCLPSFTISGKKMTLLGAGGAAKSILAQAILDGVSQISVFVRSVSMEKTRPYLDKLQEQTGFKVDLCALEYVSELQARIAESDLLVNATSVGMDGQSSPVPENIVLPETLLVADIIYQPFETPFLKWARSQGNPAVNGLGMLLYQAAEAFQLWTGKEMPTEEIWQSLTEKYQ.

Residues 20–22 (SIS) and Ser-67 each bind shikimate. Lys-71 (proton acceptor) is an active-site residue. An NADP(+)-binding site is contributed by Asp-83. Positions 92 and 107 each coordinate shikimate. NADP(+) is bound by residues 129–133 (GAGGA) and Ile-227. Residue Tyr-229 participates in shikimate binding. Gly-250 is an NADP(+) binding site.

The protein belongs to the shikimate dehydrogenase family. As to quaternary structure, homodimer.

The enzyme catalyses shikimate + NADP(+) = 3-dehydroshikimate + NADPH + H(+). It functions in the pathway metabolic intermediate biosynthesis; chorismate biosynthesis; chorismate from D-erythrose 4-phosphate and phosphoenolpyruvate: step 4/7. Its function is as follows. Involved in the biosynthesis of the chorismate, which leads to the biosynthesis of aromatic amino acids. Catalyzes the reversible NADPH linked reduction of 3-dehydroshikimate (DHSA) to yield shikimate (SA). This chain is Shikimate dehydrogenase (NADP(+)), found in Streptococcus pneumoniae (strain CGSP14).